We begin with the raw amino-acid sequence, 806 residues long: Fibroblast growth factor receptor 3 (806 aa).

Positions 1-19 (MRAAWGSVWCLCLAAAVGA) are cleaved as a signal peptide. Residues 20 to 364 (LPAARRRGAE…ELMEMDDSGS (345 aa)) are Extracellular-facing. One can recognise an Ig-like C2-type 1 domain in the interval 24–124 (RRRGAERSGG…VLGNFTVRVT (101 aa)). The cysteines at positions 61 and 107 are disulfide-linked. Residues Asn-83, Asn-96, and Asn-118 are each glycosylated (N-linked (GlcNAc...) asparagine). The tract at residues 121–146 (VRVTDSPSSGDDEDDDDESEDTGVPF) is disordered. Residues 130–141 (GDDEDDDDESED) show a composition bias toward acidic residues. Ig-like C2-type domains lie at 150 to 238 (PDKM…YQLD) and 247 to 349 (PILQ…AWLT). A disulfide bridge links Cys-170 with Cys-222. Asn-219, Asn-256, Asn-288, Asn-309, and Asn-322 each carry an N-linked (GlcNAc...) asparagine glycan. Cys-269 and Cys-333 are disulfide-bonded. A helical membrane pass occupies residues 365-389 (VYAGILSYGTGLVLFILVLVIVIIC). The Cytoplasmic portion of the chain corresponds to 390-806 (RMKMPNKKAM…HVPCNGVIRT (417 aa)). In terms of domain architecture, Protein kinase spans 466-755 (LTLGKPLGEG…LTMTSTDEYL (290 aa)). ATP contacts are provided by residues 472 to 480 (LGEGCFGQV) and Lys-502. Asp-611 functions as the Proton acceptor in the catalytic mechanism. A phosphotyrosine; by autocatalysis mark is found at Tyr-641, Tyr-642, Tyr-718, and Tyr-754.

Belongs to the protein kinase superfamily. Tyr protein kinase family. Fibroblast growth factor receptor subfamily. As to quaternary structure, monomer. Homodimer after ligand binding. Autophosphorylated. Binding of FGF family members together with heparan sulfate proteoglycan or heparin promotes receptor dimerization and autophosphorylation on tyrosine residues. Autophosphorylation occurs in trans between the two FGFR molecules present in the dimer.

Its subcellular location is the cell membrane. It carries out the reaction L-tyrosyl-[protein] + ATP = O-phospho-L-tyrosyl-[protein] + ADP + H(+). With respect to regulation, present in an inactive conformation in the absence of bound ligand. Ligand binding leads to dimerization and activation by autophosphorylation on tyrosine residues. In terms of biological role, tyrosine-protein kinase that acts as a cell-surface receptor for fibroblast growth factors and plays an essential role in the regulation of cell proliferation, differentiation and apoptosis. Plays an essential role in the regulation of chondrocyte differentiation, proliferation and apoptosis, and is required for normal skeleton development. Regulates both osteogenesis and postnatal bone mineralization by osteoblasts. Promotes apoptosis in chondrocytes, but can also promote cancer cell proliferation. Phosphorylates PLCG1, CBL and FRS2. Ligand binding leads to the activation of several signaling cascades. Activation of PLCG1 leads to the production of the cellular signaling molecules diacylglycerol and inositol 1,4,5-trisphosphate. Phosphorylation of FRS2 triggers recruitment of GRB2, GAB1, PIK3R1 and SOS1, and mediates activation of RAS, MAPK1/ERK2, MAPK3/ERK1 and the MAP kinase signaling pathway, as well as of the AKT1 signaling pathway. The sequence is that of Fibroblast growth factor receptor 3 (FGFR3) from Gallus gallus (Chicken).